We begin with the raw amino-acid sequence, 342 residues long: uncharacterized protein (342 aa).

The next 3 membrane-spanning stretches (helical) occupy residues 35-55, 134-154, and 161-180; these read YFRV…WCFS, LLFL…IIYF, and LFIT…YCFS. Disordered stretches follow at residues 198–220 and 311–342; these read SSDN…QQYN and IINN…NYTN.

It is found in the membrane. This is an uncharacterized protein from Dictyostelium discoideum (Social amoeba).